The following is a 486-amino-acid chain: MTTFYTVVSWLVILGYWVLIAGVTLRILMKRRAVPSAMAWLLIIYILPMVGIIAYLSVGELHLGKRRAERARAMWPSTAKWLNDLKACKHIFAQENSSVASSLFKLCERRQGIAGVKGNQLQLLTDSDDVMQALIRDIQLARHNIEMVFYIWQPGGMADQVAESLMAAARRGIHCRLMLDSAGSVAFFRSPWAAMMRNAGIEVVEALKVNLMRVFLRRMDLRQHRKMVMIDNYIAYTGSMNMVDPRFFKQDAGVGQWVDLMARMEGPVATAMGIVYSCDWEIETGKRILPPPPDVNIMPFEQASGHTIHTIASGPGFPEDLIHQALLTATYAAREYLIMTTPYFVPSDDLLHAICTAAQRGVDVSIILPRKNDSLLVGWASRAFFSELLAAGVKIYQFEGGLLHTKSVLVDGELSLVGTVNLDMRSLWLNFEITLVIDDTGFGADLAAVQDDYISRSRLLDARLWVKRPLWQRITERLFYFFSPLL.

Helical transmembrane passes span 3–23 (TFYTVVSWLVILGYWVLIAGV) and 38–58 (MAWLLIIYILPMVGIIAYLSV). PLD phosphodiesterase domains follow at residues 219 to 246 (MDLRQHRKMVMIDNYIAYTGSMNMVDPR) and 399 to 426 (EGGLLHTKSVLVDGELSLVGTVNLDMRS). Active-site residues include H224, K226, D231, H404, K406, and D411.

Belongs to the phospholipase D family. Cardiolipin synthase subfamily. ClsA sub-subfamily.

The protein resides in the cell inner membrane. The catalysed reaction is 2 a 1,2-diacyl-sn-glycero-3-phospho-(1'-sn-glycerol) = a cardiolipin + glycerol. Catalyzes the reversible phosphatidyl group transfer from one phosphatidylglycerol molecule to another to form cardiolipin (CL) (diphosphatidylglycerol) and glycerol. The chain is Cardiolipin synthase A from Salmonella gallinarum (strain 287/91 / NCTC 13346).